A 323-amino-acid polypeptide reads, in one-letter code: tRNA-cytidine(32) 2-sulfurtransferase (323 aa).

A PP-loop motif motif is present at residues 49-54 (SGGKDS). C124, C127, and C215 together coordinate [4Fe-4S] cluster.

This sequence belongs to the TtcA family. As to quaternary structure, homodimer. The cofactor is Mg(2+). Requires [4Fe-4S] cluster as cofactor.

It localises to the cytoplasm. The enzyme catalyses cytidine(32) in tRNA + S-sulfanyl-L-cysteinyl-[cysteine desulfurase] + AH2 + ATP = 2-thiocytidine(32) in tRNA + L-cysteinyl-[cysteine desulfurase] + A + AMP + diphosphate + H(+). It participates in tRNA modification. Its function is as follows. Catalyzes the ATP-dependent 2-thiolation of cytidine in position 32 of tRNA, to form 2-thiocytidine (s(2)C32). The sulfur atoms are provided by the cysteine/cysteine desulfurase (IscS) system. The polypeptide is tRNA-cytidine(32) 2-sulfurtransferase (Shewanella denitrificans (strain OS217 / ATCC BAA-1090 / DSM 15013)).